The chain runs to 618 residues: Protein fem-1 homolog C (618 aa).

7 ANK repeats span residues 2–31, 40–70, 82–111, 115–144, 148–177, 181–210, and 213–243; these read DLKT…DREV, NGAT…PVEL, EGAP…SVNN, TNST…DLEV, HGHT…DVNR, KGNT…SMEK, and YGMT…GLAE. TPR repeat units follow at residues 245–279 and 337–370; these read ISAL…RHSE and SYYI…QQSN. ANK repeat units follow at residues 482 to 524 and 528 to 557; these read NGFS…DVNS and DDNS…HFDS.

Belongs to the fem-1 family. As to quaternary structure, component of a CRL2 E3 ubiquitin-protein ligase complex, also named ECS (Elongin BC-CUL2/5-SOCS-box protein) complex.

It participates in protein modification; protein ubiquitination. Substrate-recognition component of a Cul2-RING (CRL2) E3 ubiquitin-protein ligase complex of the DesCEND (destruction via C-end degrons) pathway, which recognizes a C-degron located at the extreme C terminus of target proteins, leading to their ubiquitination and degradation. The C-degron recognized by the DesCEND pathway is usually a motif of less than ten residues and can be present in full-length proteins, truncated proteins or proteolytically cleaved forms. The CRL2(FEM1C) complex specifically recognizes proteins with an arginine at the C-terminus: recognizes and binds proteins ending with -Lys/Arg-Xaa-Arg and -Lys/Arg-Xaa-Xaa-Arg C-degrons, leading to their ubiquitination and degradation. This Danio rerio (Zebrafish) protein is Protein fem-1 homolog C.